Consider the following 131-residue polypeptide: D-ribose pyranase (131 aa).

The active-site Proton donor is histidine 20. Substrate contacts are provided by residues aspartate 28, histidine 98, and 120–122 (YAN).

The protein belongs to the RbsD / FucU family. RbsD subfamily. In terms of assembly, homodecamer.

The protein resides in the cytoplasm. It catalyses the reaction beta-D-ribopyranose = beta-D-ribofuranose. It functions in the pathway carbohydrate metabolism; D-ribose degradation; D-ribose 5-phosphate from beta-D-ribopyranose: step 1/2. In terms of biological role, catalyzes the interconversion of beta-pyran and beta-furan forms of D-ribose. This chain is D-ribose pyranase, found in Bacillus cereus (strain G9842).